Reading from the N-terminus, the 594-residue chain is uncharacterized protein (594 aa).

The presence of the two linear plasmids, termed pGKL1 and pGKL2, in strains of Kluyveromyces lactis confers the killer phenotype to the host cell, by promoting the secretion of a toxin able to inhibit the growth of sensitive strains. This is an uncharacterized protein from Kluyveromyces lactis (strain ATCC 8585 / CBS 2359 / DSM 70799 / NBRC 1267 / NRRL Y-1140 / WM37) (Yeast).